A 274-amino-acid chain; its full sequence is Penicillin-insensitive murein endopeptidase (274 aa).

Positions M1 to A19 are cleaved as a signal peptide. 3 disulfide bridges follow: C44–C265, C187–C235, and C216–C223. H110, H113, D120, D147, H150, and H211 together coordinate Zn(2+). Positions P227–I274 are disordered.

This sequence belongs to the peptidase M74 family. Dimer. It depends on Zn(2+) as a cofactor.

It is found in the periplasm. Its function is as follows. Murein endopeptidase that cleaves the D-alanyl-meso-2,6-diamino-pimelyl amide bond that connects peptidoglycan strands. Likely plays a role in the removal of murein from the sacculus. The protein is Penicillin-insensitive murein endopeptidase of Shigella dysenteriae serotype 1 (strain Sd197).